Consider the following 179-residue polypeptide: Crossover junction endodeoxyribonuclease RuvC (179 aa).

Residues D14, E74, and D147 contribute to the active site. The Mg(2+) site is built by D14, E74, and D147.

Belongs to the RuvC family. Homodimer which binds Holliday junction (HJ) DNA. The HJ becomes 2-fold symmetrical on binding to RuvC with unstacked arms; it has a different conformation from HJ DNA in complex with RuvA. In the full resolvosome a probable DNA-RuvA(4)-RuvB(12)-RuvC(2) complex forms which resolves the HJ. Requires Mg(2+) as cofactor.

It is found in the cytoplasm. It catalyses the reaction Endonucleolytic cleavage at a junction such as a reciprocal single-stranded crossover between two homologous DNA duplexes (Holliday junction).. In terms of biological role, the RuvA-RuvB-RuvC complex processes Holliday junction (HJ) DNA during genetic recombination and DNA repair. Endonuclease that resolves HJ intermediates. Cleaves cruciform DNA by making single-stranded nicks across the HJ at symmetrical positions within the homologous arms, yielding a 5'-phosphate and a 3'-hydroxyl group; requires a central core of homology in the junction. The consensus cleavage sequence is 5'-(A/T)TT(C/G)-3'. Cleavage occurs on the 3'-side of the TT dinucleotide at the point of strand exchange. HJ branch migration catalyzed by RuvA-RuvB allows RuvC to scan DNA until it finds its consensus sequence, where it cleaves and resolves the cruciform DNA. The polypeptide is Crossover junction endodeoxyribonuclease RuvC (Rubrobacter xylanophilus (strain DSM 9941 / JCM 11954 / NBRC 16129 / PRD-1)).